Reading from the N-terminus, the 205-residue chain is Putative 3-methyladenine DNA glycosylase (205 aa).

Belongs to the DNA glycosylase MPG family.

This chain is Putative 3-methyladenine DNA glycosylase, found in Clostridium acetobutylicum (strain ATCC 824 / DSM 792 / JCM 1419 / IAM 19013 / LMG 5710 / NBRC 13948 / NRRL B-527 / VKM B-1787 / 2291 / W).